The chain runs to 216 residues: MFKKRVIKDSRVSKRKIGDINEASEDAPDTQVTKKSTLITKKSDIQKKSVVMPRSSPQTPLSKSSSDDAAAVEVVSQKSKKGELKPLAANIKTTIITDFQPDVCKDFQQTGYCGYGDTCKFLHVRDESRQKIPIKKDWEIGGQKEVKEKEDIPFKCVLCKSDYKSPIKTECGHIFCKACFLDRYKAKKKGTCFICHKETNGTMVPVNIDKLSATQV.

Disordered regions lie at residues 19–38 (DINE…KSTL) and 43–68 (SDIQ…SSDD). A compositionally biased stretch (low complexity) spans 55–64 (SSPQTPLSKS). A C3H1-type zinc finger spans residues 98–126 (DFQPDVCKDFQQTGYCGYGDTCKFLHVRD). The RING-type zinc finger occupies 156 to 196 (CVLCKSDYKSPIKTECGHIFCKACFLDRYKAKKKGTCFICH).

The protein belongs to the CWC24 family. Associated with the spliceosome.

It localises to the nucleus. Involved in pre-mRNA splicing. The sequence is that of Pre-mRNA-splicing factor CWC24 (CWC24) from Candida albicans (strain SC5314 / ATCC MYA-2876) (Yeast).